The primary structure comprises 173 residues: Putative 4-hydroxy-4-methyl-2-oxoglutarate aldolase (173 aa).

Substrate-binding positions include 89-92 (GGNL) and Arg111. A divalent metal cation is bound at residue Asp112.

It belongs to the class II aldolase/RraA-like family. In terms of assembly, homotrimer. A divalent metal cation serves as cofactor.

The catalysed reaction is 4-hydroxy-4-methyl-2-oxoglutarate = 2 pyruvate. It carries out the reaction oxaloacetate + H(+) = pyruvate + CO2. In terms of biological role, catalyzes the aldol cleavage of 4-hydroxy-4-methyl-2-oxoglutarate (HMG) into 2 molecules of pyruvate. Also contains a secondary oxaloacetate (OAA) decarboxylase activity due to the common pyruvate enolate transition state formed following C-C bond cleavage in the retro-aldol and decarboxylation reactions. This chain is Putative 4-hydroxy-4-methyl-2-oxoglutarate aldolase, found in Albidiferax ferrireducens (strain ATCC BAA-621 / DSM 15236 / T118) (Rhodoferax ferrireducens).